The following is a 161-amino-acid chain: Troponin C, slow skeletal and cardiac muscles (161 aa).

M1 bears the N-acetylmethionine mark. EF-hand domains lie at 16–51 (QKNE…LGQN), 52–87 (PTPE…CMKD), 92–127 (KSEE…TGET), and 128–161 (ITED…KGVE). Positions 65, 67, 69, 71, and 76 each coordinate Ca(2+). S98 is modified (phosphoserine). D105, N107, D109, Y111, E116, D141, N143, D145, R147, and E152 together coordinate Ca(2+).

The protein belongs to the troponin C family.

Its function is as follows. Troponin is the central regulatory protein of striated muscle contraction. Tn consists of three components: Tn-I which is the inhibitor of actomyosin ATPase, Tn-T which contains the binding site for tropomyosin and Tn-C. The binding of calcium to Tn-C abolishes the inhibitory action of Tn on actin filaments. The polypeptide is Troponin C, slow skeletal and cardiac muscles (TNNC1) (Bos taurus (Bovine)).